We begin with the raw amino-acid sequence, 317 residues long: Carbamate kinase (317 aa).

Belongs to the carbamate kinase family. In terms of assembly, homodimer.

It carries out the reaction hydrogencarbonate + NH4(+) + ATP = carbamoyl phosphate + ADP + H2O + H(+). The protein operates within metabolic intermediate metabolism; carbamoyl phosphate degradation; CO(2) and NH(3) from carbamoyl phosphate: step 1/1. The protein is Carbamate kinase (CBK) of Giardia intestinalis (Giardia lamblia).